The primary structure comprises 197 residues: Pyridoxal 5'-phosphate synthase subunit PdxT (197 aa).

52–54 serves as a coordination point for L-glutamine; it reads GES. The active-site Nucleophile is cysteine 84. L-glutamine is bound by residues arginine 111 and 139–140; that span reads IR. Active-site charge relay system residues include histidine 175 and glutamate 177.

It belongs to the glutaminase PdxT/SNO family. In terms of assembly, in the presence of PdxS, forms a dodecamer of heterodimers. Only shows activity in the heterodimer.

It catalyses the reaction aldehydo-D-ribose 5-phosphate + D-glyceraldehyde 3-phosphate + L-glutamine = pyridoxal 5'-phosphate + L-glutamate + phosphate + 3 H2O + H(+). It carries out the reaction L-glutamine + H2O = L-glutamate + NH4(+). It participates in cofactor biosynthesis; pyridoxal 5'-phosphate biosynthesis. In terms of biological role, catalyzes the hydrolysis of glutamine to glutamate and ammonia as part of the biosynthesis of pyridoxal 5'-phosphate. The resulting ammonia molecule is channeled to the active site of PdxS. This is Pyridoxal 5'-phosphate synthase subunit PdxT from Halorubrum lacusprofundi (strain ATCC 49239 / DSM 5036 / JCM 8891 / ACAM 34).